Reading from the N-terminus, the 812-residue chain is Phosphoenolpyruvate synthase (812 aa).

The active-site Tele-phosphohistidine intermediate is the histidine 430. The substrate site is built by arginine 520, arginine 588, glutamate 690, glycine 711, serine 712, asparagine 713, and aspartate 714. Residue glutamate 690 coordinates Mg(2+). A Mg(2+)-binding site is contributed by aspartate 714. Cysteine 761 (proton donor) is an active-site residue.

Belongs to the PEP-utilizing enzyme family. The cofactor is Mg(2+).

It catalyses the reaction pyruvate + ATP + H2O = phosphoenolpyruvate + AMP + phosphate + 2 H(+). Its pathway is carbohydrate biosynthesis; gluconeogenesis. Catalyzes the phosphorylation of pyruvate to phosphoenolpyruvate. The sequence is that of Phosphoenolpyruvate synthase (ppsA) from Helicobacter pylori (strain ATCC 700392 / 26695) (Campylobacter pylori).